The chain runs to 353 residues: tRNA-specific 2-thiouridylase MnmA (353 aa).

Residues 7 to 14 (GLSGGVDS) and Leu-33 each bind ATP. The Nucleophile role is filled by Cys-94. Cys-94 and Cys-193 form a disulfide bridge. Gly-119 provides a ligand contact to ATP. The interaction with tRNA stretch occupies residues 143 to 145 (KDQ). The active-site Cysteine persulfide intermediate is Cys-193. The segment at 298–299 (RY) is interaction with tRNA.

The protein belongs to the MnmA/TRMU family.

It is found in the cytoplasm. The enzyme catalyses S-sulfanyl-L-cysteinyl-[protein] + uridine(34) in tRNA + AH2 + ATP = 2-thiouridine(34) in tRNA + L-cysteinyl-[protein] + A + AMP + diphosphate + H(+). Catalyzes the 2-thiolation of uridine at the wobble position (U34) of tRNA, leading to the formation of s(2)U34. This chain is tRNA-specific 2-thiouridylase MnmA, found in Picosynechococcus sp. (strain ATCC 27264 / PCC 7002 / PR-6) (Agmenellum quadruplicatum).